Reading from the N-terminus, the 413-residue chain is Coiled-coil domain-containing protein 83 (413 aa).

Positions methionine 1–lysine 21 are disordered. The span at asparagine 8–lysine 21 shows a compositional bias: basic and acidic residues. 2 coiled-coil regions span residues glutamate 37–isoleucine 184 and tryptophan 216–cysteine 256.

The chain is Coiled-coil domain-containing protein 83 (CCDC83) from Homo sapiens (Human).